Consider the following 323-residue polypeptide: Methenyltetrahydromethanopterin cyclohydrolase (323 aa).

It belongs to the MCH family.

The protein localises to the cytoplasm. It catalyses the reaction 5,10-methenyl-5,6,7,8-tetrahydromethanopterin + H2O = N(5)-formyl-5,6,7,8-tetrahydromethanopterin + H(+). The protein operates within one-carbon metabolism; methanogenesis from CO(2); 5,10-methenyl-5,6,7,8-tetrahydromethanopterin from CO(2): step 3/3. Functionally, catalyzes the reversible interconversion of 5-formyl-H(4)MPT to methenyl-H(4)MPT(+). The chain is Methenyltetrahydromethanopterin cyclohydrolase from Methanobrevibacter smithii (strain ATCC 35061 / DSM 861 / OCM 144 / PS).